Here is a 412-residue protein sequence, read N- to C-terminus: MPTVGSLVYIMVELAIALLAILGNMLVCWAVWLNSNLQNVTNYFVVSLAAADIAVGVLAIPFAITISTGFCAACHGCLFIACFVLVLTQSSIFSLLAIAIDRYIAIRIPLRYNGLVTGTRAKGVIAVCWVLSFAIGLTPMLGWNNCHHWGEGENQSQGCGEGQVACLFEDVVPMNYMVYYNFFACVLVPLLLMLGVYLRIFLAARRQLKQMETQPLPGERARSTLQKEVHAAKSLAIIVGLFALCWLPLHIINCFTFFCPECPHAPLWLMYPAIILSHFNSVVNPFIYAYRIREFRHTFHKIIRSHILRRQEPFKAGGTSARALAAHGSDAEQVSLRLNGHPSGVCPNGSAPHPERRPNGYALGLVSRASARESPGDTGLPDVELLSHELHGASPESPGLEGPLAQDGAGVS.

The Extracellular segment spans residues 1–7 (MPTVGSL). The chain crosses the membrane as a helical span at residues 8-32 (VYIMVELAIALLAILGNMLVCWAVW). At 33 to 42 (LNSNLQNVTN) the chain is on the cytoplasmic side. Residues 43–66 (YFVVSLAAADIAVGVLAIPFAITI) form a helical membrane-spanning segment. Topologically, residues 67–77 (STGFCAACHGC) are extracellular. Cystine bridges form between Cys71–Cys159, Cys74–Cys146, and Cys77–Cys166. A helical membrane pass occupies residues 78 to 100 (LFIACFVLVLTQSSIFSLLAIAI). Residues 101-120 (DRYIAIRIPLRYNGLVTGTR) lie on the Cytoplasmic side of the membrane. Residues 121 to 143 (AKGVIAVCWVLSFAIGLTPMLGW) form a helical membrane-spanning segment. Residues 144–173 (NNCHHWGEGENQSQGCGEGQVACLFEDVVP) lie on the Extracellular side of the membrane. Asn154 is a glycosylation site (N-linked (GlcNAc...) asparagine). Glu169 contributes to the adenosine binding site. The chain crosses the membrane as a helical span at residues 174–198 (MNYMVYYNFFACVLVPLLLMLGVYL). Topologically, residues 199–234 (RIFLAARRQLKQMETQPLPGERARSTLQKEVHAAKS) are cytoplasmic. Residues 235-258 (LAIIVGLFALCWLPLHIINCFTFF) form a helical membrane-spanning segment. Asn253 provides a ligand contact to adenosine. An intrachain disulfide couples Cys259 to Cys262. Over 259-266 (CPECPHAP) the chain is Extracellular. A helical membrane pass occupies residues 267 to 290 (LWLMYPAIILSHFNSVVNPFIYAY). Residues Ser277 and His278 each coordinate adenosine. Residues 291–412 (RIREFRHTFH…PLAQDGAGVS (122 aa)) lie on the Cytoplasmic side of the membrane. The interval 368–412 (RASARESPGDTGLPDVELLSHELHGASPESPGLEGPLAQDGAGVS) is disordered.

Belongs to the G-protein coupled receptor 1 family. As to quaternary structure, interacts (via cytoplasmic C-terminal domain) with USP4; the interaction is direct. May interact with DRD4. Interacts with NECAB2. Interacts (via cytoplasmic C-terminal domain) with GAS2L2; interaction enhances receptor-mediated adenylyl cyclase activity. Ubiquitinated. Deubiquitinated by USP4; leading to stabilization and expression at the cell surface.

The protein resides in the cell membrane. In terms of biological role, receptor for adenosine. The activity of this receptor is mediated by G proteins which activate adenylyl cyclase. The polypeptide is Adenosine receptor A2a (ADORA2A) (Equus caballus (Horse)).